Reading from the N-terminus, the 428-residue chain is UPF0229 protein YeaH (428 aa).

Residues 78-90 (GNDHFIQNDRIER) show a composition bias toward basic and acidic residues. The disordered stretch occupies residues 78–111 (GNDHFIQNDRIERPQGGGGGGSGSGQGQASQDGE). A compositionally biased stretch (gly residues) spans 92–103 (QGGGGGGSGSGQ).

The protein belongs to the UPF0229 family.

This chain is UPF0229 protein YeaH, found in Salmonella paratyphi C (strain RKS4594).